A 338-amino-acid polypeptide reads, in one-letter code: tRNA N6-adenosine threonylcarbamoyltransferase (338 aa).

Positions 111 and 115 each coordinate Fe cation. Substrate contacts are provided by residues 134 to 138, aspartate 167, glycine 180, and asparagine 272; that span reads LVSGG. Fe cation is bound at residue aspartate 300.

It belongs to the KAE1 / TsaD family. It depends on Fe(2+) as a cofactor.

The protein resides in the cytoplasm. The catalysed reaction is L-threonylcarbamoyladenylate + adenosine(37) in tRNA = N(6)-L-threonylcarbamoyladenosine(37) in tRNA + AMP + H(+). Its function is as follows. Required for the formation of a threonylcarbamoyl group on adenosine at position 37 (t(6)A37) in tRNAs that read codons beginning with adenine. Is involved in the transfer of the threonylcarbamoyl moiety of threonylcarbamoyl-AMP (TC-AMP) to the N6 group of A37, together with TsaE and TsaB. TsaD likely plays a direct catalytic role in this reaction. The chain is tRNA N6-adenosine threonylcarbamoyltransferase from Aliivibrio salmonicida (strain LFI1238) (Vibrio salmonicida (strain LFI1238)).